Reading from the N-terminus, the 86-residue chain is MNLSLINIGFGNVVSANRIISIVSPESAPIKRIITVARDNNKLVDATYGRRTRAVIITDSDHVVLSAVQPETVGQRVISNDEISDE.

This sequence belongs to the RemA family.

In Oceanobacillus iheyensis (strain DSM 14371 / CIP 107618 / JCM 11309 / KCTC 3954 / HTE831), this protein is Putative regulatory protein OB1501.